We begin with the raw amino-acid sequence, 86 residues long: Small ribosomal subunit protein bS20 (86 aa).

Residues 1-25 form a disordered region; the sequence is MANIKSAIKRAKTSEKRRVANSQEK.

It belongs to the bacterial ribosomal protein bS20 family.

Functionally, binds directly to 16S ribosomal RNA. This chain is Small ribosomal subunit protein bS20, found in Exiguobacterium sp. (strain ATCC BAA-1283 / AT1b).